Consider the following 504-residue polypeptide: D-alanine--D-alanyl carrier protein ligase (504 aa).

152–153 provides a ligand contact to ATP; the sequence is TS. D197 provides a ligand contact to D-alanine. 292–297 provides a ligand contact to ATP; the sequence is NTYGPT. Residue V301 participates in D-alanine binding. Residues D383, 394–397, and K492 each bind ATP; that span reads YNGR. K492 lines the D-alanine pocket.

Belongs to the ATP-dependent AMP-binding enzyme family. DltA subfamily.

It is found in the cytoplasm. It carries out the reaction holo-[D-alanyl-carrier protein] + D-alanine + ATP = D-alanyl-[D-alanyl-carrier protein] + AMP + diphosphate. The protein operates within cell wall biogenesis; lipoteichoic acid biosynthesis. Its function is as follows. Catalyzes the first step in the D-alanylation of lipoteichoic acid (LTA), the activation of D-alanine and its transfer onto the D-alanyl carrier protein (Dcp) DltC. In an ATP-dependent two-step reaction, forms a high energy D-alanyl-AMP intermediate, followed by transfer of the D-alanyl residue as a thiol ester to the phosphopantheinyl prosthetic group of the Dcp. D-alanylation of LTA plays an important role in modulating the properties of the cell wall in Gram-positive bacteria, influencing the net charge of the cell wall. This Bacillus mycoides (strain KBAB4) (Bacillus weihenstephanensis) protein is D-alanine--D-alanyl carrier protein ligase.